A 653-amino-acid polypeptide reads, in one-letter code: Dual specificity protein kinase shkB (653 aa).

Positions 112–133 (NPNNNNNNSNNTNSSDSNQNYS) are disordered. The Protein kinase domain occupies 174–432 (YNREAKLGSG…FAEISKQRIL (259 aa)). Residues 180 to 188 (LGSGAFGSV) and Lys201 each bind ATP. The active-site Proton acceptor is the Asp298. Residues 534–625 (GFMAATSSKN…IKEPFEGGPF (92 aa)) enclose the SH2 domain.

This sequence belongs to the protein kinase superfamily. TKL Ser/Thr protein kinase family. SH2 domain-containing protein kinase subfamily.

It localises to the membrane. It catalyses the reaction L-seryl-[protein] + ATP = O-phospho-L-seryl-[protein] + ADP + H(+). The enzyme catalyses L-threonyl-[protein] + ATP = O-phospho-L-threonyl-[protein] + ADP + H(+). Functionally, required for proper chemotaxis and phagocytosis; proper spatiotemporal control of F-actin levels in chemotaxing cells. Negative regulator of the PI3K (phosphatidylinositol 3 kinase) pathway. Predominantly phosphorylates serines and threonines and tyrosines at a lower level. The sequence is that of Dual specificity protein kinase shkB (shkB) from Dictyostelium discoideum (Social amoeba).